A 256-amino-acid polypeptide reads, in one-letter code: Homeobox protein ceh-34 (256 aa).

The homeobox DNA-binding region spans 134 to 193; the sequence is GEETNYCFKSKSRNVLRDAYKKCQYPSVEDKRRLAQQTELSIIQVSNWFKNKRQRERAAG. Positions 187–233 are disordered; it reads QRERAAGQLDRSSARSNDSDDGSSGCESKPPMNIDSPAPPPLPTSFD.

Belongs to the SIX/Sine oculis homeobox family. In terms of assembly, interacts (via N-terminus) with eya-1 (via C-terminus). In terms of tissue distribution, shows expression only in the pharyngeal nervous system.

It localises to the nucleus. In terms of biological role, acts as a transcription regulator. Binds to the sequence motif 5'-TCAGGTT-3'. Binds to the cis-regulatory element of proapoptotic factor egl-1 gene and together with eya-1 activates egl-1 expression to promote motor neuron M4 sister cell apoptosis. Also promotes apoptosis of I1 pharyngeal neuron sister cell. Together with eya-1, required to specify the coelomocyte fate in embryonic and postembryonic precursors. Required to establish and maintain the differentiation of all 14 classes of pharyngeal neurons. Controls the neurotransmitter signaling capacity of the neurons and is required for the expression of some neurotransmitter receptors including mgl-1, glr-2 and ser-7. Affects the neuropeptidergic identity of pharyngeal neurons. Required for the pharyngeal expression of sensory receptors gur-3, glu-7 and str-97, antimicrobial defense genes such as spp-12, gpla-1/flr-2 and htrl-1, and pan-pharyngeal nervous system genes such as kin-36. Required to establish and maintain pharyngeal nervous system architecture by ensuring correct axon and synapse organization. Required for expression of eya-1 which may act as a transcriptional cofactor to specify distinct pharyngeal neuron types. Cooperates with several homeobox proteins to specify distinct pharyngeal neuron types including unc-86 in the NSM and I1 neurons, ceh-14 in the I2 neuron, ceh-2 and pros-1 in the I3 neuron, ceh-45 in the M1 neuron, ceh-2 in the M3 neuron, ceh-28 and zag-1 in the M4 neuron, and vab-15 in the M5 neuron. The protein is Homeobox protein ceh-34 (ceh-34) of Caenorhabditis elegans.